The primary structure comprises 207 residues: Ribosomal RNA small subunit methyltransferase G (207 aa).

S-adenosyl-L-methionine-binding positions include G73, L78, 124 to 125 (VE), and R139.

This sequence belongs to the methyltransferase superfamily. RNA methyltransferase RsmG family.

The protein localises to the cytoplasm. The catalysed reaction is guanosine(527) in 16S rRNA + S-adenosyl-L-methionine = N(7)-methylguanosine(527) in 16S rRNA + S-adenosyl-L-homocysteine. Functionally, specifically methylates the N7 position of guanine in position 527 of 16S rRNA. The polypeptide is Ribosomal RNA small subunit methyltransferase G (Escherichia coli O1:K1 / APEC).